The primary structure comprises 604 residues: MESDAKNYQIMDSWEEEPRDKSTNISSALNIIEFILSTDPQEDLSENDTINTRTQQLSATICQPEIKPTETSEKVSGSTDKNRQSGSSHECTTEAKDRNIDQETVQGGSGRRSSSDSRAETVVSGGISGSITDSKNGTQNTENIDLNEIRKMDKDSIERKMRQSADVPSEISGSDVIFTTEQSRNSDHGRSLEPISTPDTRSMSVVTAATPDDEEEILMKNSRMKKSSSTHQEDDKRIKKGGGGKGKDWFKKSRDTDNQTSTSDHKPTSKGQKKISKTTTTNTDTKGQTETQTESSETQSPSWNPIIDNNTDRTEQTSTTPPTTTPRSTRTKESIRTNSESKPKTQKTIGKERKDTEESNRFTERAITLLQNLGVIQSTSKLDLYQDKRVVCVANVLNNVDTASKIDFLAGLVIGVSMDNDTKLIQIQNEMLNLKADLKRMDESHRRLIENQREQLSLITSLISNLKIMTERGGKKDQNESNERVSMIKTKLKEEKIKKTRFDPLMEAQGIDKNIPDLYRHAGNTLENDVQVKSEILSSYNESNATRLIPRKVSSTMRSLVAVINNSNLPQSTKQSYINELKHCKSDEEVSELMDMFNEDVNNC.

Disordered regions lie at residues 1 to 22 (MESD…RDKS) and 39 to 360 (DPQE…EESN). Residues 22 to 42 (STNISSALNIIEFILSTDPQE) form an N0 binding region. Composition is skewed to polar residues over residues 47-61 (NDTI…SATI) and 74-90 (KVSG…SSHE). Residues 91–101 (CTTEAKDRNID) are compositionally biased toward basic and acidic residues. Residues 129–144 (GSITDSKNGTQNTENI) show a composition bias toward polar residues. The segment covering 147-163 (NEIRKMDKDSIERKMRQ) has biased composition (basic and acidic residues). The segment covering 197–207 (TPDTRSMSVVT) has biased composition (polar residues). A compositionally biased stretch (basic and acidic residues) spans 245–267 (KGKDWFKKSRDTDNQTSTSDHKP). Composition is skewed to low complexity over residues 277–300 (KTTT…ETQS) and 317–328 (TSTTPPTTTPRS). A compositionally biased stretch (basic and acidic residues) spans 330 to 360 (RTKESIRTNSESKPKTQKTIGKERKDTEESN). The segment at 400-470 (VDTASKIDFL…SLISNLKIMT (71 aa)) is multimerization. Positions 424–451 (LIQIQNEMLNLKADLKRMDESHRRLIEN) form a coiled coil. The interval 450 to 483 (ENQREQLSLITSLISNLKIMTERGGKKDQNESNE) is l protein binding. Residues 585–604 (KSDEEVSELMDMFNEDVNNC) form an interaction with the nucleocapsid (N-RNA) region.

Belongs to the respirovirus P protein family. As to quaternary structure, homotetramer. Interacts (via multimerization domain) with polymerase L; this interaction forms the polymerase L-P complex. Interacts (via N-terminus) with N0; this interaction allows P to chaperon N0 to avoid N polymerization before encapsidation. Interacts (via C-terminus) with N-RNA template; this interaction positions the polymerase on the template. Interacts with host PI4KB; this interaction allows P to recruit PI4KB to the viral factories to generate PI4P to facilitate viral replication.

Functionally, essential cofactor of the RNA polymerase L that plays a central role in the transcription and replication by forming the polymerase complex with RNA polymerase L and recruiting L to the genomic N-RNA template for RNA synthesis. Also plays a central role in the encapsidation of nascent RNA chains by forming the encapsidation complex with the nucleocapsid protein N (N-P complex). Acts as a chaperone for newly synthesized free N protein, so-called N0, allowing encapsidation of nascent RNA chains during replication. The nucleoprotein protein N prevents excessive phosphorylation of P, which leads to down-regulation of viral transcription/ replication. Participates, together with N, in the formation of viral factories (viroplasms), which are large inclusions in the host cytoplasm where replication takes place. Recruits host PI4KB and remodel the host endoplasmic reticulum membrane to form viral replication factories. The polypeptide is Phosphoprotein (P/V/D) (Human parainfluenza 3 virus (strain Wash/47885/57) (HPIV-3)).